A 524-amino-acid chain; its full sequence is Probable myosin-binding protein 5 (524 aa).

The helical transmembrane segment at Phe20 to Leu40 threads the bilayer. The region spanning Ser299–Arg397 is the GTD-binding domain. A coiled-coil region spans residues Ser462 to Gln490.

It is found in the membrane. Functionally, probable membrane-anchored myosin receptors. The chain is Probable myosin-binding protein 5 from Arabidopsis thaliana (Mouse-ear cress).